The following is a 328-amino-acid chain: Putative glycosyltransferase 41 (328 aa).

It belongs to the glycosyltransferase group 1 family. Glycosyltransferase 4 subfamily.

This chain is Putative glycosyltransferase 41 (SIFV0041), found in Sulfolobus islandicus filamentous virus (isolate Iceland/Hveragerdi) (SIFV).